The sequence spans 329 residues: Glutamyl-Q tRNA(Asp) synthetase (329 aa).

Residues 8 to 12 and Glu44 each bind L-glutamate; that span reads RLAPS. The short motif at 11–21 is the 'HIGH' region element; it reads PSPTGAQHLGN. Residues Cys100, Cys102, Tyr129, and Cys133 each contribute to the Zn(2+) site. L-glutamate contacts are provided by Tyr196 and Arg214. Residues 252 to 256 carry the 'KMSKS' region motif; that stretch reads RLAKR. Lys255 lines the ATP pocket.

Belongs to the class-I aminoacyl-tRNA synthetase family. GluQ subfamily. It depends on Zn(2+) as a cofactor.

In terms of biological role, catalyzes the tRNA-independent activation of glutamate in presence of ATP and the subsequent transfer of glutamate onto a tRNA(Asp). Glutamate is transferred on the 2-amino-5-(4,5-dihydroxy-2-cyclopenten-1-yl) moiety of the queuosine in the wobble position of the QUC anticodon. The chain is Glutamyl-Q tRNA(Asp) synthetase from Rhodopirellula baltica (strain DSM 10527 / NCIMB 13988 / SH1).